A 276-amino-acid polypeptide reads, in one-letter code: MDPLKLFTGVPKKEYPTAPKTVTPLYPNPMVCRMVLEVNRCENLCVACNSPVLVRDGALCVSQTLDYVKQKLVSDTFMGFTMACLLDCEDLVDSINLAPHVFAQRVFVFRPPNSYLLEMCVLSSMLENCETYTRRFVESLVSRARFIYSKSPCIDACFLLHSIEMMASTIIDYFKLDLEGTQPRYPGLMMYKLHGAIEGGSFESKGLLRPIYHESFKLCSDPDASFDEEEETGEAGVTFNVFYCETIFTKHLRAEAVAKVFKERCLEGFPRHQILS.

The protein belongs to the herpesviridae cytoplasmic envelopment protein 1 family.

It localises to the virion. It is found in the virion tegument. The protein localises to the host cytoplasm. The protein resides in the host Golgi apparatus. In terms of biological role, plays a critical role in cytoplasmic virus egress. Participates in the final step of tegumentation and envelope acquisition within the host cytoplasm. The sequence is that of Cytoplasmic envelopment protein 1 (42) from Equus caballus (Horse).